Consider the following 274-residue polypeptide: 3-methyl-2-oxobutanoate hydroxymethyltransferase (274 aa).

Mg(2+) is bound by residues Asp-49 and Asp-88. 3-methyl-2-oxobutanoate-binding positions include 49 to 50, Asp-88, and Lys-118; that span reads DS. Glu-120 serves as a coordination point for Mg(2+). Glu-187 functions as the Proton acceptor in the catalytic mechanism.

The protein belongs to the PanB family. As to quaternary structure, homodecamer; pentamer of dimers. Mg(2+) is required as a cofactor.

Its subcellular location is the cytoplasm. The catalysed reaction is 3-methyl-2-oxobutanoate + (6R)-5,10-methylene-5,6,7,8-tetrahydrofolate + H2O = 2-dehydropantoate + (6S)-5,6,7,8-tetrahydrofolate. Its pathway is cofactor biosynthesis; (R)-pantothenate biosynthesis; (R)-pantoate from 3-methyl-2-oxobutanoate: step 1/2. In terms of biological role, catalyzes the reversible reaction in which hydroxymethyl group from 5,10-methylenetetrahydrofolate is transferred onto alpha-ketoisovalerate to form ketopantoate. The protein is 3-methyl-2-oxobutanoate hydroxymethyltransferase of Rhodopseudomonas palustris (strain ATCC BAA-98 / CGA009).